Consider the following 360-residue polypeptide: Sorbitol dehydrogenase (360 aa).

Position 42 (C42) interacts with Zn(2+). Y48 lines the substrate pocket. Positions 67 and 68 each coordinate Zn(2+). Residue E153 coordinates substrate. NAD(+)-binding positions include D201, R206, 277–279 (AGN), and 301–303 (SFR). Substrate is bound by residues R303 and Y304.

It belongs to the zinc-containing alcohol dehydrogenase family. In terms of assembly, homotetramer. Zn(2+) serves as cofactor.

The enzyme catalyses keto-D-fructose + NADH + H(+) = D-sorbitol + NAD(+). Polyol dehydrogenase that catalyzes the reversible NAD(+)-dependent oxidation of various sugar alcohols. Is active with D-sorbitol (D-glucitol) as substrate, leading to the C2-oxidized product D-fructose. Suppresses growth arrest induced by a p53 tumor mutant in fission yeast. This Schizosaccharomyces pombe (strain 972 / ATCC 24843) (Fission yeast) protein is Sorbitol dehydrogenase (tms1).